We begin with the raw amino-acid sequence, 261 residues long: ATP synthase subunit a (261 aa).

Transmembrane regions (helical) follow at residues 31–51, 64–84, 97–117, 126–146, 166–188, 201–223, and 235–255; these read IAFT…LIFM, WQAA…TNIG, LFMF…VVGV, LTVT…VGFW, IPMI…GLRL, VLAG…VSIP, and ELLV…LYLN.

This sequence belongs to the ATPase A chain family. As to quaternary structure, F-type ATPases have 2 components, CF(1) - the catalytic core - and CF(0) - the membrane proton channel. CF(1) has five subunits: alpha(3), beta(3), gamma(1), delta(1), epsilon(1). CF(0) has three main subunits: a(1), b(2) and c(9-12). The alpha and beta chains form an alternating ring which encloses part of the gamma chain. CF(1) is attached to CF(0) by a central stalk formed by the gamma and epsilon chains, while a peripheral stalk is formed by the delta and b chains.

It is found in the cell inner membrane. Its function is as follows. Key component of the proton channel; it plays a direct role in the translocation of protons across the membrane. The polypeptide is ATP synthase subunit a (Rhizorhabdus wittichii (strain DSM 6014 / CCUG 31198 / JCM 15750 / NBRC 105917 / EY 4224 / RW1) (Sphingomonas wittichii)).